The sequence spans 223 residues: Ribosomal RNA small subunit methyltransferase G (223 aa).

S-adenosyl-L-methionine is bound by residues glycine 90, leucine 95, 141-142, and arginine 156; that span reads VE.

Belongs to the methyltransferase superfamily. RNA methyltransferase RsmG family.

It localises to the cytoplasm. It carries out the reaction guanosine(527) in 16S rRNA + S-adenosyl-L-methionine = N(7)-methylguanosine(527) in 16S rRNA + S-adenosyl-L-homocysteine. Functionally, specifically methylates the N7 position of guanine in position 527 of 16S rRNA. The polypeptide is Ribosomal RNA small subunit methyltransferase G (Ralstonia nicotianae (strain ATCC BAA-1114 / GMI1000) (Ralstonia solanacearum)).